A 108-amino-acid chain; its full sequence is uncharacterized protein (108 aa).

Composition is skewed to basic and acidic residues over residues 1–15 (MSEA…EVLV) and 53–69 (KLKD…RNSE). Residues 1–77 (MSEAKDNGSR…SELDQDEEDK (77 aa)) form a disordered region.

This is an uncharacterized protein from Homo sapiens (Human).